Consider the following 910-residue polypeptide: Protein translocase subunit SecA (910 aa).

ATP is bound by residues Q89, 107–111 (GEGKT), and D496. Residues 873–910 (QEFSGGNLNRSQSNGSSVTVTTSSGGGTERKTSRRRKR) are disordered. Positions 876–886 (SGGNLNRSQSN) are enriched in polar residues.

This sequence belongs to the SecA family. Monomer and homodimer. Part of the essential Sec protein translocation apparatus which comprises SecA, SecYEG and auxiliary proteins SecDF. Other proteins may also be involved.

The protein resides in the cell inner membrane. It localises to the cytoplasm. The enzyme catalyses ATP + H2O + cellular proteinSide 1 = ADP + phosphate + cellular proteinSide 2.. Its function is as follows. Part of the Sec protein translocase complex. Interacts with the SecYEG preprotein conducting channel. Has a central role in coupling the hydrolysis of ATP to the transfer of proteins into and across the cell membrane, serving as an ATP-driven molecular motor driving the stepwise translocation of polypeptide chains across the membrane. This chain is Protein translocase subunit SecA, found in Leptospira interrogans serogroup Icterohaemorrhagiae serovar copenhageni (strain Fiocruz L1-130).